Here is a 1072-residue protein sequence, read N- to C-terminus: DNA-directed RNA polymerase subunit beta (1072 aa).

The protein belongs to the RNA polymerase beta chain family. As to quaternary structure, in plastids the minimal PEP RNA polymerase catalytic core is composed of four subunits: alpha, beta, beta', and beta''. When a (nuclear-encoded) sigma factor is associated with the core the holoenzyme is formed, which can initiate transcription.

It localises to the plastid. The protein resides in the chloroplast. It carries out the reaction RNA(n) + a ribonucleoside 5'-triphosphate = RNA(n+1) + diphosphate. In terms of biological role, DNA-dependent RNA polymerase catalyzes the transcription of DNA into RNA using the four ribonucleoside triphosphates as substrates. This Draba nemorosa (Woodland whitlowgrass) protein is DNA-directed RNA polymerase subunit beta.